The sequence spans 222 residues: Glutathione S-transferase alpha-2 (222 aa).

In terms of domain architecture, GST N-terminal spans 3–83; the sequence is GKPVLHYFNA…YIATKYDLYG (81 aa). K4 bears the N6-succinyllysine mark. Glutathione is bound by residues Y9, K45, 54-55, and 67-68; these read QV and QT. Residues 85–208 form the GST C-terminal domain; that stretch reads DMKERALIDM…QPGSQRKPAM (124 aa).

This sequence belongs to the GST superfamily. Alpha family. In terms of assembly, homodimer or heterodimer of GSTA1 and GSTA2.

It is found in the cytoplasm. It carries out the reaction RX + glutathione = an S-substituted glutathione + a halide anion + H(+). Its function is as follows. Catalyzes the conjugation of glutathione to a large variety of electrophilic compounds. The chain is Glutathione S-transferase alpha-2 (Gsta2) from Rattus norvegicus (Rat).